The chain runs to 977 residues: Synaptopodin 2-like protein (977 aa).

Residues 6-88 (EVLVTLSGGA…QLVLTVQRLA (83 aa)) form the PDZ domain. Disordered regions lie at residues 91–226 (GPVQ…GPLR), 317–352 (AGTG…QSDW), and 364–677 (AGSR…EDAL). Phosphoserine occurs at positions 108 and 111. Positions 109–123 (PLSPEPPGAPVPQPL) are enriched in pro residues. T141 carries the post-translational modification Phosphothreonine. S143, S178, and S180 each carry phosphoserine. Residues 183–192 (EPAPTIPGPP) show a composition bias toward pro residues. Over residues 194–203 (QGDSRVSSPS) the composition is skewed to polar residues. Over residues 216–226 (EALLLPHGPLR) the composition is skewed to low complexity. A phosphoserine mark is found at S345, S350, S374, S381, and S384. Omega-N-methylarginine is present on R386. The span at 436–450 (PPSPLPAPVASPRPF) shows a compositional bias: pro residues. Omega-N-methylarginine occurs at positions 466, 469, and 479. The span at 510-525 (LSSQGPTPLPSFTSGV) shows a compositional bias: polar residues. Composition is skewed to low complexity over residues 530–545 (PVSG…GPVT) and 572–595 (SAAA…ARPE). The span at 596–607 (APAPGPGAPEPP) shows a compositional bias: pro residues. 2 positions are modified to phosphoserine: S670 and S678. The interval 697–802 (TLPHVTPKTP…PSLPPSWKYS (106 aa)) is disordered. Residues 704–730 (KTPPPMAPKTPPPMTPKTPPPVAPKPP) show a composition bias toward pro residues. T705 and T713 each carry phosphothreonine. An Omega-N-methylarginine modification is found at R757. Pro residues predominate over residues 781–796 (GLGPRPRSPSPTPSLP). 2 positions are modified to phosphoserine: S788 and S790. A Phosphothreonine modification is found at T792. Omega-N-methylarginine occurs at positions 806, 826, and 889. Position 891 is a phosphoserine (S891). Phosphothreonine is present on residues T892 and T898. R910 is modified (omega-N-methylarginine). R921 carries the post-translational modification Asymmetric dimethylarginine; alternate. R921 carries the omega-N-methylarginine; alternate modification. A disordered region spans residues 922–950 (TELASAPVPSPAPPPEAPRGLGASPSSCG). Residues 929–938 (VPSPAPPPEA) are compositionally biased toward pro residues. 2 positions are modified to omega-N-methylarginine: R955 and R957.

It belongs to the synaptopodin family.

It localises to the cytoplasm. The protein localises to the cytoskeleton. Actin-associated protein that may play a role in modulating actin-based shape. The sequence is that of Synaptopodin 2-like protein (SYNPO2L) from Homo sapiens (Human).